The chain runs to 155 residues: Interleukin-2 (155 aa).

The signal sequence occupies residues 1–20 (MYSRQLASCVALALVLLANS). The O-linked (GalNAc...) threonine glycan is linked to Thr23. A disulfide bond links Cys78 and Cys126.

This sequence belongs to the IL-2 family.

Its subcellular location is the secreted. Cytokine produced by activated CD4-positive helper T-cells and to a lesser extend activated CD8-positive T-cells and natural killer (NK) cells that plays pivotal roles in the immune response and tolerance. Binds to a receptor complex composed of either the high-affinity trimeric IL-2R (IL2RA/CD25, IL2RB/CD122 and IL2RG/CD132) or the low-affinity dimeric IL-2R (IL2RB and IL2RG). Interaction with the receptor leads to oligomerization and conformation changes in the IL-2R subunits resulting in downstream signaling starting with phosphorylation of JAK1 and JAK3. In turn, JAK1 and JAK3 phosphorylate the receptor to form a docking site leading to the phosphorylation of several substrates including STAT5. This process leads to activation of several pathways including STAT, phosphoinositide-3-kinase/PI3K and mitogen-activated protein kinase/MAPK pathways. Functions as a T-cell growth factor and can increase NK-cell cytolytic activity as well. Promotes strong proliferation of activated B-cells and subsequently immunoglobulin production. Plays a pivotal role in regulating the adaptive immune system by controlling the survival and proliferation of regulatory T-cells, which are required for the maintenance of immune tolerance. Moreover, participates in the differentiation and homeostasis of effector T-cell subsets, including Th1, Th2, Th17 as well as memory CD8-positive T-cells. The protein is Interleukin-2 (IL2) of Meriones unguiculatus (Mongolian jird).